The primary structure comprises 87 residues: Developmentally-regulated ectodermal protein (87 aa).

The signal sequence occupies residues 1–16 (MKRLLVLTLVSAILMA).

The protein is Developmentally-regulated ectodermal protein of Tripneustes gratilla (Hawaian sea urchin).